A 583-amino-acid polypeptide reads, in one-letter code: Aspartate--tRNA ligase (583 aa).

E174 provides a ligand contact to L-aspartate. An aspartate region spans residues 198–201 (QITK). L-aspartate is bound at residue R220. Residues 220–222 (RDE) and Q229 each bind ATP. H443 lines the L-aspartate pocket. E477 contributes to the ATP binding site. L-aspartate is bound at residue R484. 529–532 (GLDR) lines the ATP pocket.

It belongs to the class-II aminoacyl-tRNA synthetase family. Type 1 subfamily. Homodimer.

The protein resides in the cytoplasm. It catalyses the reaction tRNA(Asp) + L-aspartate + ATP = L-aspartyl-tRNA(Asp) + AMP + diphosphate. Its function is as follows. Catalyzes the attachment of L-aspartate to tRNA(Asp) in a two-step reaction: L-aspartate is first activated by ATP to form Asp-AMP and then transferred to the acceptor end of tRNA(Asp). This is Aspartate--tRNA ligase from Streptococcus thermophilus (strain ATCC BAA-250 / LMG 18311).